The sequence spans 342 residues: Protein BASIC PENTACYSTEINE6 (342 aa).

The stretch at 41–67 (AIQERNLAISEKKAAVAERDMAFLQRD) forms a coiled coil. The alanine-zipper stretch occupies residues 41 to 76 (AIQERNLAISEKKAAVAERDMAFLQRDTAIAERNNA). Residues 143 to 199 (REMEPNDGLPTSPPAGSTLESAKPKRGKRVNPKATTQTAANKRGPKNQRKVKKESED) form a disordered region. A required for nucleus and nucleolus localization region spans residues 164–195 (AKPKRGKRVNPKATTQTAANKRGPKNQRKVKK). Positions 185–194 (RGPKNQRKVK) are enriched in basic residues. Residues 192–195 (KVKK) carry the Nuclear localization signal motif.

This sequence belongs to the BBR/BPC family. As to quaternary structure, homodimer. Heterodimer with BPC4. Expressed in seedlings, leaves and pistils. Detected in the base of flowers and tips of carpels, in sepal vasculature, in young rosette, in the lateral and tip of primary roots, and in ovule at the exception of the outer integument.

Its subcellular location is the nucleus. The protein localises to the nucleolus. Functionally, transcriptional regulator that specifically binds to GA-rich elements (GAGA-repeats) present in regulatory sequences of genes involved in developmental processes. This chain is Protein BASIC PENTACYSTEINE6 (BPC6), found in Arabidopsis thaliana (Mouse-ear cress).